Reading from the N-terminus, the 492-residue chain is Catalase isozyme 1 (492 aa).

Active-site residues include His-65 and Asn-138. Position 348 (Tyr-348) interacts with heme.

Belongs to the catalase family. As to quaternary structure, homotetramer. Heme is required as a cofactor.

It localises to the peroxisome. The enzyme catalyses 2 H2O2 = O2 + 2 H2O. Functionally, occurs in almost all aerobically respiring organisms and serves to protect cells from the toxic effects of hydrogen peroxide. This Solanum lycopersicum (Tomato) protein is Catalase isozyme 1 (CAT1).